Reading from the N-terminus, the 914-residue chain is Calcium-activated chloride channel regulator 1 (914 aa).

Residues 1–21 (MGPFKSSVFILILHLLEGALS) form the signal peptide. The interval 46–199 (DETLIQQIKD…GITGTNVVKK (154 aa)) is metalloprotease domain. Residue His-156 participates in Zn(2+) binding. Residue Glu-157 is part of the active site. Residues His-160 and Asp-167 each contribute to the Zn(2+) site. The region spanning 306-475 (IVCLVLDKSG…NGLIDAFGAL (170 aa)) is the VWFA domain. N-linked (GlcNAc...) asparagine glycosylation is found at Asn-503, Asn-585, Asn-770, Asn-804, Asn-810, Asn-831, Asn-836, and Asn-890.

This sequence belongs to the CLCR family. Post-translationally, glycosylated. In terms of processing, the 125-kDa product is autoproteolytically processed by the metalloprotease domain and yields to two cell-surface-associated subunits, a 90-kDa protein and a group of 37- to 41-kDa proteins. The cleavage is necessary for calcium-activated chloride channel (CaCC) activation activity. As to expression, highly expressed in small intestine and colon namely in intestinal basal crypt epithelia and goblet cells, and appendix. Weakly expressed in uterus, testis and kidney. Expressed in the airways epithelium of both asthmatic and healthy patients. Expressed in the bronchial epithelium, especially in mucus-producing goblet cells. Expressed in normal turbinate mucosa and nasal polyp. Expressed in.

The protein resides in the secreted. The protein localises to the extracellular space. It is found in the cell membrane. Functionally, may be involved in mediating calcium-activated chloride conductance. May play critical roles in goblet cell metaplasia, mucus hypersecretion, cystic fibrosis and AHR. May be involved in the regulation of mucus production and/or secretion by goblet cells. Involved in the regulation of tissue inflammation in the innate immune response. May play a role as a tumor suppressor. Induces MUC5AC. The sequence is that of Calcium-activated chloride channel regulator 1 (CLCA1) from Homo sapiens (Human).